The primary structure comprises 1046 residues: MDSLKASSAYKRIDTIPKLLEYMWSLFPNIIAIKNGSEKSTSILGSLNKKMYNPMIQNSVEFCDLLAKNILKIQPFAQGGFGQVGSLTIDEDKYNQPLKAIVISFKRYGGFEPFYVSVIIKLYLSNEPPKWSIGESSIDKGTFYISDPLSEMIFGSMLGHLYDLGVCPFFTKYFGAYLCKNEKTSIITEMATIELRKLISRNRNYGIAQKYPLSVINLLFQYVYGLFIMKSYYGMVHFDTQHRNLMATYIHNRDIKINEKIQSPYIYQGEDICNKSFFLFQTHLTSQNPRLNQNGADVPVFICIKNTGLLLKIIDYGVCVSYLNRSLVNPYKNDITISSIKKDLERINALNALNKTRESKSYSNTVDLQYTLTNIWEHMIKGLDSYTGQMAPDVNAPLDYKVALELLNDFSEKFFGESQYRLSNFLQDHPERQVQLTSLKNGGKGLAWVSYIHNTGIEKEEFNNPLRLLEGLINACGSEKNLRINASFKGSINQEISIYYLEPEIPSMIQNLGGLSDDNSVLLLASASDREKNLNLFNHYMNKSNLYKENCYDNVTKSTIQCKQIKSDIYKYSLSSLSSKKLYSPSSQHFIESLNSIPSDSSSSGSSRKSSPRGSPNLGEAPTNEEIFTTFEELPSENLIKRTGIFDYYQVQINPSAINLNRNSKGAQVYQKYQSWLDFKNIKDDKVGDYVETVFLHAFRLRGAVKSIQMDKRKDLWEGALEHFGTEGSAPNGGLAINGGYFIVPGNLNRLYPNLTNRDLFEPIGFSYDSKMLTNGTKLSFPSVYHNDLAFVFGSSSEGRESQINILSYTSFMNLHRTVDDTVRYEIKNTKGVDGLPEIFEETVKAIAMVPFISEDVDEDLIGTRPIKANGSEILDEDYTWAFCTGPILIWEGKVVFTENKMNTDLMVTNIEDKNSLNNEEREILINAVPNAKNSYKYRAAEGEGNQFYGMRHSHRYMVHNILALDAIGRPYFIFCEGRGFDSPGLDRVQLANLISVFGMKTAVSLDGGFSANAVYKDCDNSGNCRPLFALNDPEKRRLGLSLYIS.

The span at 594-615 (LNSIPSDSSSSGSSRKSSPRGS) shows a compositional bias: low complexity. The tract at residues 594–622 (LNSIPSDSSSSGSSRKSSPRGSPNLGEAP) is disordered.

This is an uncharacterized protein from Invertebrate iridescent virus 6 (IIV-6).